The sequence spans 101 residues: MSDQEAKPSAEDLGDKKEGEYIKLKVIGQDSSEIHFKVKMTTHLKKLKESYCQRQGVPMNSLRFLFEGQRITDNHTPKELGMEEEDVIEVYQEQTGGHSTV.

One can recognise a Ubiquitin-like domain in the interval 20-97 (EYIKLKVIGQ…IEVYQEQTGG (78 aa)). Gly97 is covalently cross-linked (Glycyl lysine isopeptide (Gly-Lys) (interchain with K-? in acceptor proteins)). Residues 98 to 101 (HSTV) constitute a propeptide that is removed on maturation.

This sequence belongs to the ubiquitin family. SUMO subfamily. As to quaternary structure, interacts with SAE2, UBE2I, RANBP2, PIAS1 and PIAS2. Covalently attached to a number of proteins. Post-translationally, cleavage of precursor form by a sentrin-specific protease is necessary for function.

It localises to the nucleus membrane. The protein localises to the nucleus speckle. The protein resides in the cytoplasm. It is found in the nucleus. Its subcellular location is the PML body. It localises to the cell membrane. Ubiquitin-like protein that can be covalently attached to proteins as a monomer or a lysine-linked polymer. Covalent attachment via an isopeptide bond to its substrates requires prior activation by the E1 complex SAE1-SAE2 and linkage to the E2 enzyme UBE2I. This post-translational modification on lysine residues of proteins plays a crucial role in a number of cellular processes such as nuclear transport, DNA replication and repair, mitosis and signal transduction. Polymeric SUMO1 chains are also susceptible to polyubiquitination which functions as a signal for proteasomal degradation of modified proteins. This Gallus gallus (Chicken) protein is Small ubiquitin-related modifier 1 (SUMO1).